The following is a 468-amino-acid chain: Sorting and assembly machinery component 50 homolog A (468 aa).

Residues 1–24 are disordered; sequence MGTVHARSLDPLPMNGPDFGSPDD. A POTRA domain is found at 44–124; the sequence is VVVQRVHFEG…LDVTFEVTEL (81 aa).

It belongs to the SAM50/omp85 family. In terms of assembly, associates with the mitochondrial contact site and cristae organizing system (MICOS) complex (also known as MINOS or MitOS complex).

The protein resides in the mitochondrion outer membrane. Functionally, may play a role in the maintenance of the structure of mitochondrial cristae. The protein is Sorting and assembly machinery component 50 homolog A (samm50-a) of Xenopus laevis (African clawed frog).